The primary structure comprises 1035 residues: NACHT, LRR and PYD domains-containing protein 3 (1035 aa).

The Pyrin domain occupies 1-93 (MKMMSVRCKL…WEKAKKDQPE (93 aa)). S5 bears the Phosphoserine mark. Residues C8 and C106 are joined by a disulfide bond. Phosphotyrosine is present on Y13. C128 carries S-palmitoyl cysteine lipidation. Positions 129–132 (KKKK) are required for binding to phosphatidylinositol 4-phosphate (PtdIns4P). Residues Y134 and Y138 each carry the phosphotyrosine modification. Residues 138–208 (YRRHVRSRFY…SSLKLELLFE (71 aa)) enclose the FISNA domain. Residue S159 is modified to Phosphoserine. Phosphotyrosine is present on Y166. T167 serves as a coordination point for ATP. Position 199 is a phosphoserine (S199). The region spanning 218 to 534 (HTVVFQGAAG…EFFAAMYYLL (317 aa)) is the NACHT domain. ATP is bound at residue 224 to 231 (GAAGIGKT). A phosphoserine mark is found at S263 and S293. K322 is covalently cross-linked (Glycyl lysine isopeptide (Lys-Gly) (interchain with G-Cter in ubiquitin)). The residue at position 332 (S332) is a Phosphoserine. A KFERQ-like motif 1 motif is present at residues 353 to 357 (LEKLQ). Residue K428 forms a Glycyl lysine isopeptide (Lys-Gly) (interchain with G-Cter in ubiquitin) linkage. H520 contacts ATP. A KFERQ-like motif 2 motif is present at residues 603-607 (QVRLE). K689 is covalently cross-linked (Glycyl lysine isopeptide (Lys-Gly) (interchain with G-Cter in ubiquitin)). 2 positions are modified to phosphoserine: S727 and S734. LRR repeat units follow at residues 741 to 761 (SLTELDLSDNTLGDPGMRVLC), 770 to 791 (NIQRLWLGRCGLTHQCCFNISS), 798 to 818 (KLVELDLSDNALGDFGVRLLC), 827 to 848 (NLQKLWLVSCCLTSACCQDLAL), and 855 to 875 (SLTRLYIGENALGDSGVQVLC). Residues 797-801 (QKLVE) carry the KFERQ-like motif 3 motif. Residue S805 is modified to Phosphoserine. Residues C836, C837, and C843 are each lipidated (S-palmitoyl cysteine). Residue Y860 is modified to Phosphotyrosine. K877 participates in a covalent cross-link: Glycyl lysine isopeptide (Lys-Gly) (interchain with G-Cter in ubiquitin). LRR repeat units follow at residues 884–905 (NLQKLGLVNSGLTSLCCSALTS), 912–932 (NLTHLYLRSNALGDMGLKLLC), 941–962 (KLQMLELDNCSLTSHSCWDLST), and 969–990 (SLRKLNLSNNDLGDLCVVTLCE). C957 is lipidated: S-palmitoyl cysteine. A Glycyl lysine isopeptide (Lys-Gly) (interchain with G-Cter in ubiquitin) cross-link involves residue K972. A KFERQ-like motif 4 motif is present at residues 990-994 (EVLKQ). At S1034 the chain carries Phosphoserine.

It belongs to the NLRP family. As to quaternary structure, sensor component of NLRP3 inflammasomes; inflammasomes are supramolecular complexes that assemble in the cytosol in response to pathogens and other damage-associated signals and play critical roles in innate immunity and inflammation. The core of NLRP3 inflammasomes consists of a signal sensor component (NLRP3), an adapter (PYCARD/ASC), which recruits an effector pro-inflammatory caspase (CASP1 and, possibly, CASP4 and CASP5). Homodecamer; inactive NLRP3 forms homodecameric double-ring cages that hide pyrin domains within NACHT-LRR rings to avoid premature activation. Interacts (via pyrin domain) with PYCARD/ASC (via pyrin domain); interaction is direct. Interacts (via LRR repeat domain) with NEK7 (via N-terminus); the interaction is required for the formation of the complex NLRP3:PYCARD, oligomerization of PYCARD/ASC and activation of CASP1. Interacts (via LRR repeat domain) with NR4A1/Nur77 (via N-terminus); the interaction is direct, requires activation of NR4A1 by its ligands NBRE-containing dsDNA and lipopolysaccharide, and stimulates the association of NLRP3 with NEK7 for non-canonical NLRP3 inflammasome activation. Interacts with CARD8; leading to inhibit formation of the NLRP3 inflammasome. Interacts with MEFV; this interaction targets NLRP3 to degradation by autophagy, hence preventing excessive IL1B- and IL18-mediated inflammation. Interacts with EIF2AK2/PKR; this interaction requires EIF2AK2 activity, is accompanied by EIF2AK2 autophosphorylation and promotes inflammasome assembly in response to specific stimuli. Interacts with GBP5 (via DAPIN domain); this interaction promotes inflammasome assembly in response to microbial and soluble, but not crystalline, agents. Interacts with PML (isoform PML-1) (via the leucine-rich repeat (LRR) domain); PML-mediated increase in NLRP3 inflammasome activation does not depend upon this interaction. Interacts (via NACHT domain) with DHX33 (via DEAH box); NLRP3 activation in presence of cytosolic dsRNA is mediated by DHX33. Interacts (via NACHT and LRR domains) with ARRB2; this interaction is direct and inducible by polyunsaturated fatty acids (PUFAs). Interacts (via NACHT domain) with DDX3X under both LPS-primed and inflammasome-activating conditions. Interacts with IRF4 (via the LRR domain); this interaction is direct and is required for optimal IRF4 binding to IL4 promoter and efficient IL4 transactivation during differentiation of Th2 helper T-cells. Interacts with MAVS; promoting localization to mitochondria and activation of the NLRP3 inflammasome. Interacts with MARK4; promoting localization of NLRP3 to the microtubule organizing center (MTOC). Interacts with TRIM50; this interaction also promotes NLRP3 oligomerization and subsequent inflammasome activation. Interacts with IRGM; preventing NLRP3 inflammasome assembly and promoting NLRP3 degradation. Interacts (via NACHT and LLR domains) with ABHD8; this interaction is enhanced in the presence of NLRP3 inflammasome inducers, such as ATP, nigericin, silica, or alum. Interaction with ABHD8 leads the recruitment of ZDHHC12, hence facilitating NLRP3 palmitoylation and degradation by the chaperone-mediated autophagy pathway (CMA), therefore attenuating NLRP3 inflammasome activation. Phosphorylation by MAPK8/JNK1 increases inflammasome activation by promoting deubiquitination by BRCC3 and NLRP3 homooligomerization. Phosphorylation at Ser-805 by CSNK1A1 prevents inflammasome activation by preventing NEK7 recruitment. Phosphorylation at Ser-5 in the pyrin domain inhibits homomultimerization of NLRP3 and activation of the NLRP3 inflammasome: dephosphorylation by protein phosphatase 2A (PP2A) promotes assembly of the NLRP3 inflammasome. Phosphorylation at Ser-293 by PKD/PRKD1 promotes NLRP3 inflammasome assembly. Phosphorylation by ERK1/MAPK3 promotes NLRP3 inflammasome assembly. Phosphorylation by BTK (at Tyr-134, Tyr-138 and Tyr-166) in the region that mediates binding to phosphatidylinositol phosphate, promotes relocalization of NLRP3 and assembly of the NLRP3 inflammasome. Phosphorylation at Tyr-860 inhibits NLRP3 inflammasome assembly: dephosphorylation by PTPN22 promotes inflammasome activation. Phosphorylated by LATS1 and LATS2 at Ser-263 following palmitoylation by ZDHHC1, promoting its relocalization to the microtubule organizing center (MTOC), where NLRP3 is activated by NEK7, leading to inflammasome assembly and activation. Post-translationally, ubiquitinated; undergoes both 'Lys-48'- and 'Lys-63'-linked polyubiquitination. Ubiquitination does not lead to degradation, but inhibits inflammasome activation. Deubiquitination is catalyzed by BRCC3 and associated with NLRP3 activation and inflammasome assembly. This process can be induced by the activation of Toll-like receptors (by LPS), through a non-transcriptional pathway dependent on the mitochondrial production of reactive oxygen species, and by ATP. Ubiquitinated by TRIM31 via 'Lys-48'-linked ubiquitination, leading to its degradation by the proteasome. Ubiquitinated at Lys-689 by the SCF(FBXL2) complex, leading to its degradation by the proteasome. Ubiquitinated by TRIM35 via 'lys-48' and 'Lys-63'-linked ubiquitination leading to inhibition of NLRP3 inflammasome activation. Undergoes 'Lys-27'-linked polyubiquitination by MARCHF5, leading to NLRP3-NEK7 complex formation and NLRP3 oligomerization. In terms of processing, the disulfide bond in the pyrin domain might play a role in reactive oxygen species-mediated activation. Palmitoylation by ZDHHC12 promotes NLRP3 degradation by the chaperone-mediated autophagy pathway (CMA) and therefore limits NLRP3 inflammasome activation. Interaction with ZDHHC12, and hence NLRP3 palmitoylation, is greatly enhanced by ABHD8. Following palmitoylation, HSPA8/HSC70 recognizes and binds the KFERQ-like motifs on NLRP3 and promotes NLRP3 recruitment to lysosomes, where it is degraded via the chaperone-mediated autophagy pathway in a LAMP2-dependent process. Palmitoylation at Cys-836 and Cys-837 by ZDHHC5 enhances its binding to NEK7 leading to inflammasome assembly and activation. Palmitoylation at Cys-128 and Cys-957 by ZDHHC1 facilitates phosphorylation at Ser-263 by LATS1 and LATS2, promoting its relocalization to the microtubule organizing center (MTOC), where NLRP3 is activated by NEK7, leading to inflammasome assembly and activation. Depalmitoylated by ABHD17A. Post-translationally, degraded via selective autophagy following interaction with IRGM. IRGM promotes NLRP3 recruitment to autophagosome membranes, promoting its SQSTM1/p62-dependent autophagy-dependent degradation.

Its subcellular location is the cytoplasm. The protein localises to the cytosol. The protein resides in the inflammasome. It is found in the cytoskeleton. It localises to the microtubule organizing center. Its subcellular location is the golgi apparatus membrane. The protein localises to the endoplasmic reticulum. The protein resides in the mitochondrion. It is found in the secreted. It localises to the nucleus. It catalyses the reaction ATP + H2O = ADP + phosphate + H(+). With respect to regulation, under resting conditions, NLRP3 binds ADP and is autoinhibited. Inactive NLRP3 forms homodecameric double-ring cages that hide pyrin domains within NACHT-LRR rings to avoid premature activation. NLRP3 activation stimuli include extracellular ATP, nigericin, reactive oxygen species, crystals of monosodium urate or cholesterol, amyloid-beta fibers, environmental or industrial particles and nanoparticles, such as asbestos, silica, aluminum salts, cytosolic dsRNA, etc. Almost all stimuli trigger intracellular K(+) efflux. These stimuli lead to membrane perturbations that induce activation of NLRP3. Upon activation, NLRP3 is transported to microtubule organizing center (MTOC), where it is unlocked by NEK7, leading to its relocalization to dispersed trans-Golgi network (dTGN) vesicle membranes and recruitment of PYCARD/ASC for the formation of an active inflammasome complex. NEK7-activated NLRP3 forms a disk-shaped inflammasome. NLRP3 and PYCARD/ASC interact via their respective pyrin domains; interaction initiates speck formation (nucleation) which greatly enhances further addition of soluble PYCARD/ASC molecules to the speck in a prion-like polymerization process. Clustered PYCARD/ASC nucleates the formation of CASP1 filaments through the interaction of their respective CARD domains, acting as a platform for CASP1 polymerization and activation. Active CASP1 then processes IL1B and IL18 precursors, leading to the release of mature cytokines in the extracellular milieu and inflammatory response. NLRP3 inflammasome assembly is inhibited by IRGM, which impedes NLRP3 oligomerization. NLRP3 inflammasome is inhibited by cyclic AMP (cAMP), which directly binds NLRP3; inhibition is relieved by calcium-sensing receptor CASR, which inhibits production of cAMP. Specifically inhibited by sulfonylurea MCC950 (also named CP-456,773, CRID3), a potent and specific small-molecule inhibitor of the NLRP3 inflammasome that acts by preventing ATP hydrolysis. In terms of biological role, sensor component of the NLRP3 inflammasome, which mediates inflammasome activation in response to defects in membrane integrity, leading to secretion of inflammatory cytokines IL1B and IL18 and pyroptosis. In response to pathogens and other damage-associated signals that affect the integrity of membranes, initiates the formation of the inflammasome polymeric complex composed of NLRP3, CASP1 and PYCARD/ASC. Recruitment of pro-caspase-1 (proCASP1) to the NLRP3 inflammasome promotes caspase-1 (CASP1) activation, which subsequently cleaves and activates inflammatory cytokines IL1B and IL18 and gasdermin-D (GSDMD), promoting cytokine secretion and pyroptosis. Activation of NLRP3 inflammasome is also required for HMGB1 secretion; stimulating inflammatory responses. Under resting conditions, ADP-bound NLRP3 is autoinhibited. NLRP3 activation stimuli include extracellular ATP, nigericin, reactive oxygen species, crystals of monosodium urate or cholesterol, amyloid-beta fibers, environmental or industrial particles and nanoparticles, such as asbestos, silica, aluminum salts, cytosolic dsRNA, etc. Almost all stimuli trigger intracellular K(+) efflux. These stimuli lead to membrane perturbation and activation of NLRP3. Upon activation, NLRP3 is transported to microtubule organizing center (MTOC), where it is unlocked by NEK7, leading to its relocalization to dispersed trans-Golgi network (dTGN) vesicle membranes and formation of an active inflammasome complex. Associates with dTGN vesicle membranes by binding to phosphatidylinositol 4-phosphate (PtdIns4P). Shows ATPase activity. Independently of inflammasome activation, regulates the differentiation of T helper 2 (Th2) cells and has a role in Th2 cell-dependent asthma and tumor growth. During Th2 differentiation, required for optimal IRF4 binding to IL4 promoter and for IRF4-dependent IL4 transcription. Binds to the consensus DNA sequence 5'-GRRGGNRGAG-3'. May also participate in the transcription of IL5, IL13, GATA3, CCR3, CCR4 and MAF. The polypeptide is NACHT, LRR and PYD domains-containing protein 3 (Rattus norvegicus (Rat)).